We begin with the raw amino-acid sequence, 523 residues long: Chitinase Chi52 (523 aa).

Positions 1 to 30 (MNQAVRFRPVITFALAFLLLITWFAPRADA) are cleaved as a signal peptide. The interval 80–101 (GSGGETPTPDTAPPSVPAGLTS) is disordered. Residues 95 to 180 (VPAGLTSSSI…TSLSVTTSNG (86 aa)) enclose the Fibronectin type-III domain. In terms of domain architecture, GH18 spans 190–513 (KWLIGYWHNF…SAHRPFLNGL (324 aa)). Residue glutamate 302 is the Proton donor of the active site.

The protein belongs to the glycosyl hydrolase 18 family. Chitinase class II subfamily.

It carries out the reaction Random endo-hydrolysis of N-acetyl-beta-D-glucosaminide (1-&gt;4)-beta-linkages in chitin and chitodextrins.. With respect to regulation, activity is inhibited by Cu(2+) and Co(2+), and almost completely inhibited by SDS. Its function is as follows. Acidic chitinase that displays a broad substrate specificity, showing the highest specific activity toward colloidal chitin, followed by ethylene glycol chitin and ball milled chitin, but exhibits no activity toward powdery chitin and chitosan. Hydrolyzes colloidal chitin and chitooligosaccharides with degree of polymerization 2-5 to release mainly N-acetyl chitobiose. Displays inhibition effects on the growth of some phytopathogenic fungi, including Alternaria alstroemeriae, Botrytis cinerea, Rhizoctonia solani, Sclerotinia sclerotiorum and Valsa mali. This Paenibacillus xylanexedens protein is Chitinase Chi52.